Reading from the N-terminus, the 472-residue chain is MDNSDCRVPWASAPSSMTCLSLDPTKCHSSSSSSKCQPDCDTPPAAEKIQRHIAYTQRCPGKITTLLAVLLLVLPLSFTPAHSCGPGRGLGRRRERNLYPLVLKQTIPNLSEYTSGASGPLEGPIRRDSPKFKDLVPNYNRDILFRDDEGTGADRLMSKRCKEKLNVLAYSVMNEWPGVRLLVAESWDEDYQHGKESLHYEGRAVTIATSDRDQSKYGMLARLAVEAGFDWVSYVSRRHIYCSVKSDSSISSHVHGCFTPESTALLEGGVRKPLGELSIGDRVLSMTSNGQPVYSEVILFMDRNLKQMQNFVRLHTAGGAVLTVTPAHLVSVWQPERQELTFTFADRIEERQHVLVRNEETGELRPDQVIKVESVRSMGVVAPLTREGTIVVNSVAASCYAVINSQSLAHWGLAPMRLLSTLEAWLPAKDQLRSSKDHPKDSSAERQNGIHWYAEALYKIKDYVLPKSWRHD.

Cys84 carries N-palmitoyl cysteine lipidation. Ca(2+)-binding residues include Glu149, Asp154, Glu185, Asp188, and Asp190. Residue Gly256 is the site of Cholesterol glycine ester attachment.

It belongs to the hedgehog family. As to quaternary structure, interacts with shf. The C-terminal part of the hedgehog protein precursor displays an autoproteolysis activity that results in the cleavage of the full-length protein into two parts (N-product and C-product). In addition, the C-terminal part displays a cholesterol transferase activity that results by the covalent attachment of a cholesterol moiety to the C-terminal of the newly generated N-product. The N-product is the active species in both local and long-range signaling, whereas the C-product has no signaling activity. Post-translationally, cholesterylation is required for N-product targeting to lipid rafts and multimerization. In terms of processing, N-palmitoylation by Rasp of the hedgehog N-product, within the secretory pathway, is required for the embryonic and larval patterning activities of the hedgehog signal.

The protein localises to the nucleus. It is found in the cytoplasm. Its subcellular location is the cell membrane. It carries out the reaction glycyl-L-cysteinyl-[protein] + cholesterol + H(+) = [protein]-C-terminal glycyl cholesterol ester + N-terminal L-cysteinyl-[protein]. Functionally, the C-terminal part of the hedgehog protein precursor displays an autoproteolysis activity that results in the cleavage of the full-length protein into two parts (N-product and C-product). In addition, the C-terminal part displays a cholesterol transferase activity that results by the covalent attachment of a cholesterol moiety to the C-terminal of the newly generated N-product. Once cleaved, the C-product has no signaling activity and diffuses from the cell. In terms of biological role, the dually lipidated hedgehog protein N-product is a morphogen which is essential for a variety of patterning events during development. Establishes the anterior-posterior axis of the embryonic segments and patterns the larval imaginal disks. Binds to the patched (ptc) receptor, which functions in association with smoothened (smo), to activate the transcription of target genes wingless (wg), decapentaplegic (dpp) and ptc. In the absence of hh, ptc represses the constitutive signaling activity of smo through fused (fu). Essential component of a signaling pathway which regulates the Duox-dependent gut immune response to bacterial uracil; required to activate Cad99C-dependent endosome formation, norpA-dependent Ca2+ mobilization and p38 MAPK, which are essential steps in the Duox-dependent production of reactive oxygen species (ROS) in response to intestinal bacterial infection. During photoreceptor differentiation, it up-regulates transcription of Ubr3, which in turn promotes the hh-signaling pathway by mediating the ubiquitination and degradation of cos. This Drosophila ananassae (Fruit fly) protein is Protein hedgehog.